A 27-amino-acid chain; its full sequence is Defensin-like protein 1 (27 aa).

Residue Q1 is modified to Pyrrolidone carboxylic acid.

It belongs to the DEFL family. In terms of assembly, forms oligomers in its native state.

In terms of biological role, possesses antifungal activity sensitive to inorganic cations. The polypeptide is Defensin-like protein 1 (Brassica campestris (Field mustard)).